Here is a 158-residue protein sequence, read N- to C-terminus: Endoribonuclease YbeY (158 aa).

Zn(2+)-binding residues include His-124, His-128, and His-134.

It belongs to the endoribonuclease YbeY family. It depends on Zn(2+) as a cofactor.

It localises to the cytoplasm. Its function is as follows. Single strand-specific metallo-endoribonuclease involved in late-stage 70S ribosome quality control and in maturation of the 3' terminus of the 16S rRNA. In Caldicellulosiruptor bescii (strain ATCC BAA-1888 / DSM 6725 / KCTC 15123 / Z-1320) (Anaerocellum thermophilum), this protein is Endoribonuclease YbeY.